A 473-amino-acid chain; its full sequence is Serine carboxypeptidase-like 25 (473 aa).

The signal sequence occupies residues 1-22; it reads MAMAKLAIFTTLMAILVMTSQG. N-linked (GlcNAc...) asparagine glycosylation is found at Asn-46 and Asn-143. 3 cysteine pairs are disulfide-bonded: Cys-92/Cys-358, Cys-252/Cys-263, and Cys-288/Cys-326. The active site involves Ser-185. Residues Asn-289, Asn-299, Asn-347, and Asn-367 are each glycosylated (N-linked (GlcNAc...) asparagine). Catalysis depends on residues Asp-395 and His-447.

This sequence belongs to the peptidase S10 family. In terms of tissue distribution, ubiquitous.

The protein resides in the secreted. Functionally, probable carboxypeptidase. This Arabidopsis thaliana (Mouse-ear cress) protein is Serine carboxypeptidase-like 25 (SCPL25).